The chain runs to 352 residues: Respiratory nitrate reductase subunit beta (352 aa).

In terms of domain architecture, 4Fe-4S ferredoxin-type 1 spans 20 to 48 (VAMVMDLNKCIGCQTCTVACKSLWTEGGG). [4Fe-4S] cluster contacts are provided by cysteine 29, cysteine 32, cysteine 35, and cysteine 39. Disordered stretches follow at residues 63 to 95 (KGYP…KEDY) and 111 to 131 (SDRP…DEDQ). Positions 78–95 (SSEHKERKPGQIPDKEDY) are enriched in basic and acidic residues. 2 4Fe-4S ferredoxin-type domains span residues 139 to 170 (SYYF…KREE) and 172 to 201 (GIVL…YNAT). Residues cysteine 148, cysteine 151, and cysteine 156 each coordinate [4Fe-4S] cluster. Positions 160, 181, and 187 each coordinate [3Fe-4S] cluster. 5 residues coordinate [4Fe-4S] cluster: cysteine 191, cysteine 208, cysteine 211, cysteine 229, and cysteine 233.

Probable multiprotein complex; a catalytic heterodimer of an alpha and beta chain is proposed to associate with additional subunits involved in membrane attachment and electron transfer. It depends on [4Fe-4S] cluster as a cofactor. The cofactor is [3Fe-4S] cluster.

Its subcellular location is the cell membrane. It catalyses the reaction nitrate + a quinol = a quinone + nitrite + H2O. Inhibited by cyanide, azide and antimycin A. Enzyme stability is not dependent on salt concentration. The respiratory membrane-bound nitrate reductase enzyme complex plays a role in generation of metabolic energy by using nitrate as a terminal electron acceptor during anaerobic conditions. The beta chain is an electron transfer unit containing four cysteine clusters involved in the formation of iron-sulfur centers. The polypeptide is Respiratory nitrate reductase subunit beta (narH) (Haloferax mediterranei (strain ATCC 33500 / DSM 1411 / JCM 8866 / NBRC 14739 / NCIMB 2177 / R-4) (Halobacterium mediterranei)).